The primary structure comprises 336 residues: Cellodextrinase A (336 aa).

The active-site Proton donor is glutamate 141.

Belongs to the glycosyl hydrolase 5 (cellulase A) family.

Its subcellular location is the secreted. Crystalline cellulose degradation. This is Cellodextrinase A (celA) from Ruminococcus flavefaciens.